Consider the following 633-residue polypeptide: Threonine--tRNA ligase (633 aa).

The 61-residue stretch at 1-61 (MINIYFNNNL…TENCTFEVIT (61 aa)) folds into the TGS domain. The interval 242 to 533 (DHRKIGKELE…LIEHHSGKFP (292 aa)) is catalytic. Residues C333, H384, and H510 each contribute to the Zn(2+) site.

It belongs to the class-II aminoacyl-tRNA synthetase family. In terms of assembly, homodimer. The cofactor is Zn(2+).

Its subcellular location is the cytoplasm. The enzyme catalyses tRNA(Thr) + L-threonine + ATP = L-threonyl-tRNA(Thr) + AMP + diphosphate + H(+). In terms of biological role, catalyzes the attachment of threonine to tRNA(Thr) in a two-step reaction: L-threonine is first activated by ATP to form Thr-AMP and then transferred to the acceptor end of tRNA(Thr). Also edits incorrectly charged L-seryl-tRNA(Thr). This Ehrlichia canis (strain Jake) protein is Threonine--tRNA ligase.